Consider the following 214-residue polypeptide: Mediator of RNA polymerase II transcription subunit 29 (214 aa).

Positions 1–78 (MMNQMGMHMQ…QQQSQQTEKV (78 aa)) are disordered. A compositionally biased stretch (gly residues) spans 15 to 34 (VPGGPGGPVGMAGGPVGGVG). Residues 44-74 (QMQQQQQVAAQQQQQQQQQQQAQAHQQQSQQ) show a composition bias toward low complexity.

This sequence belongs to the Mediator complex subunit 29 family. As to quaternary structure, component of the Mediator complex.

Its subcellular location is the nucleus. In terms of biological role, component of the Mediator complex, a coactivator involved in the regulated transcription of nearly all RNA polymerase II-dependent genes. Mediator functions as a bridge to convey information from gene-specific regulatory proteins to the basal RNA polymerase II transcription machinery. Mediator is recruited to promoters by direct interactions with regulatory proteins and serves as a scaffold for the assembly of a functional preinitiation complex with RNA polymerase II and the general transcription factors. The sequence is that of Mediator of RNA polymerase II transcription subunit 29 (ix) from Aedes aegypti (Yellowfever mosquito).